We begin with the raw amino-acid sequence, 248 residues long: Probable transcriptional regulatory protein Desal_2886 (248 aa).

A disordered region spans residues 1-21; sequence MAGHSKWANIQHRKGRQDAKR.

This sequence belongs to the TACO1 family.

It localises to the cytoplasm. The polypeptide is Probable transcriptional regulatory protein Desal_2886 (Maridesulfovibrio salexigens (strain ATCC 14822 / DSM 2638 / NCIMB 8403 / VKM B-1763) (Desulfovibrio salexigens)).